The chain runs to 199 residues: Cell division protein SepF (199 aa).

The disordered stretch occupies residues T15–E79.

This sequence belongs to the SepF family. Homodimer. Interacts with FtsZ.

Its subcellular location is the cytoplasm. Cell division protein that is part of the divisome complex and is recruited early to the Z-ring. Probably stimulates Z-ring formation, perhaps through the cross-linking of FtsZ protofilaments. Its function overlaps with FtsA. The protein is Cell division protein SepF of Streptococcus sanguinis (strain SK36).